A 201-amino-acid polypeptide reads, in one-letter code: UPF0301 protein Rleg2_0617 (201 aa).

It belongs to the UPF0301 (AlgH) family.

This is UPF0301 protein Rleg2_0617 from Rhizobium leguminosarum bv. trifolii (strain WSM2304).